A 619-amino-acid chain; its full sequence is Dihydroxy-acid dehydratase (619 aa).

Aspartate 81 is a binding site for Mg(2+). Cysteine 122 provides a ligand contact to [2Fe-2S] cluster. The Mg(2+) site is built by aspartate 123 and lysine 124. Lysine 124 is modified (N6-carboxylysine). Position 195 (cysteine 195) interacts with [2Fe-2S] cluster. Glutamate 491 contributes to the Mg(2+) binding site. Serine 517 functions as the Proton acceptor in the catalytic mechanism.

The protein belongs to the IlvD/Edd family. Homodimer. The cofactor is [2Fe-2S] cluster. It depends on Mg(2+) as a cofactor.

It catalyses the reaction (2R)-2,3-dihydroxy-3-methylbutanoate = 3-methyl-2-oxobutanoate + H2O. The catalysed reaction is (2R,3R)-2,3-dihydroxy-3-methylpentanoate = (S)-3-methyl-2-oxopentanoate + H2O. It participates in amino-acid biosynthesis; L-isoleucine biosynthesis; L-isoleucine from 2-oxobutanoate: step 3/4. Its pathway is amino-acid biosynthesis; L-valine biosynthesis; L-valine from pyruvate: step 3/4. Functionally, functions in the biosynthesis of branched-chain amino acids. Catalyzes the dehydration of (2R,3R)-2,3-dihydroxy-3-methylpentanoate (2,3-dihydroxy-3-methylvalerate) into 2-oxo-3-methylpentanoate (2-oxo-3-methylvalerate) and of (2R)-2,3-dihydroxy-3-methylbutanoate (2,3-dihydroxyisovalerate) into 2-oxo-3-methylbutanoate (2-oxoisovalerate), the penultimate precursor to L-isoleucine and L-valine, respectively. The sequence is that of Dihydroxy-acid dehydratase from Sphingopyxis alaskensis (strain DSM 13593 / LMG 18877 / RB2256) (Sphingomonas alaskensis).